A 509-amino-acid chain; its full sequence is ATP synthase subunit alpha (509 aa).

169–176 lines the ATP pocket; the sequence is GDRKTGKT.

The protein belongs to the ATPase alpha/beta chains family. In terms of assembly, F-type ATPases have 2 components, CF(1) - the catalytic core - and CF(0) - the membrane proton channel. CF(1) has five subunits: alpha(3), beta(3), gamma(1), delta(1), epsilon(1). CF(0) has three main subunits: a(1), b(2) and c(9-12). The alpha and beta chains form an alternating ring which encloses part of the gamma chain. CF(1) is attached to CF(0) by a central stalk formed by the gamma and epsilon chains, while a peripheral stalk is formed by the delta and b chains.

The protein resides in the cell membrane. It carries out the reaction ATP + H2O + 4 H(+)(in) = ADP + phosphate + 5 H(+)(out). In terms of biological role, produces ATP from ADP in the presence of a proton gradient across the membrane. The alpha chain is a regulatory subunit. In Limosilactobacillus reuteri (strain DSM 20016) (Lactobacillus reuteri), this protein is ATP synthase subunit alpha.